A 131-amino-acid polypeptide reads, in one-letter code: Profilin-2 (131 aa).

A disulfide bond links Cys13 and Cys115. The short motif at 81–97 is the Involved in PIP2 interaction element; the sequence is AVIRGKKGPGGVTVKKT. Thr111 is modified (phosphothreonine).

This sequence belongs to the profilin family. As to quaternary structure, multimer. Occurs in many kinds of cells as a complex with monomeric actin in a 1:1 ratio. In terms of processing, phosphorylated by MAP kinases.

Its subcellular location is the cytoplasm. It is found in the cytoskeleton. In terms of biological role, binds to actin and affects the structure of the cytoskeleton. At high concentrations, profilin prevents the polymerization of actin, whereas it enhances it at low concentrations. By binding to PIP2, it inhibits the formation of IP3 and DG. In Hevea brasiliensis (Para rubber tree), this protein is Profilin-2.